We begin with the raw amino-acid sequence, 574 residues long: Transmembrane glycoprotein NMB (574 aa).

Residues 1-22 (MESLCGVLGFLLLAAGLPLQAA) form the signal peptide. Topologically, residues 23–502 (KRFRDVLGHE…DPDSPLRAVN (480 aa)) are extracellular. Residues Asn-93, Asn-134, Asn-200, Asn-249, Asn-275, Asn-296, Asn-300, Asn-306, and Asn-312 are each glycosylated (N-linked (GlcNAc...) asparagine). The region spanning 250 to 338 (LSDEIFLRDL…STPPPPSTPP (89 aa)) is the PKD domain. The tract at residues 320-353 (PGPCPPPSPSTPPPPSTPPSPPPSPLPTLSTPSP) is disordered. Over residues 321 to 345 (GPCPPPSPSTPPPPSTPPSPPPSPL) the composition is skewed to pro residues. 2 N-linked (GlcNAc...) asparagine glycosylation sites follow: Asn-463 and Asn-471. The chain crosses the membrane as a helical span at residues 503 to 523 (GVLISIGCLAVLVTMVTILLY). The Cytoplasmic segment spans residues 524-574 (KKHKAYKPIGNCPRNTVKGKGLSVLLSHAKAPFFRGDQEKDPLLQDKPRTL). Position 546 is a phosphoserine (Ser-546). Positions 558 to 560 (RGD) match the Cell attachment site motif.

Belongs to the PMEL/NMB family. In terms of tissue distribution, may be up-regulated in bone metastatic breast cancer cells.

Its subcellular location is the cell membrane. The protein resides in the melanosome membrane. The protein localises to the early endosome membrane. Functionally, could be a melanogenic enzyme. This is Transmembrane glycoprotein NMB (Gpnmb) from Mus musculus (Mouse).